The chain runs to 77 residues: Acyl carrier protein (77 aa).

In terms of domain architecture, Carrier spans 1 to 76 (MSVEQRVKEI…DVLDYIKSKQ (76 aa)). Ser-36 is subject to O-(pantetheine 4'-phosphoryl)serine.

The protein belongs to the acyl carrier protein (ACP) family. In terms of processing, 4'-phosphopantetheine is transferred from CoA to a specific serine of apo-ACP by AcpS. This modification is essential for activity because fatty acids are bound in thioester linkage to the sulfhydryl of the prosthetic group.

Its subcellular location is the cytoplasm. It participates in lipid metabolism; fatty acid biosynthesis. Functionally, carrier of the growing fatty acid chain in fatty acid biosynthesis. The polypeptide is Acyl carrier protein (Sulfurihydrogenibium sp. (strain YO3AOP1)).